We begin with the raw amino-acid sequence, 240 residues long: Ribonuclease T2 (240 aa).

Positions 1 to 19 (MRFIAFAVIFSAVYLCSSA) are cleaved as a signal peptide. An intrachain disulfide couples C41 to C46. H56 is an active-site residue. 3 cysteine pairs are disulfide-bonded: C66–C110, C173–C227, and C191–C201. N67 and N73 each carry an N-linked (GlcNAc...) asparagine glycan. Active-site residues include E103 and H107.

It belongs to the RNase T2 family. In terms of tissue distribution, ubiquitous.

The protein localises to the lysosome lumen. The protein resides in the endoplasmic reticulum lumen. It is found in the secreted. The enzyme catalyses a ribonucleotidyl-ribonucleotide-RNA + H2O = a 3'-end 3'-phospho-ribonucleotide-RNA + a 5'-end dephospho-ribonucleoside-RNA + H(+). In terms of biological role, has ribonuclease activity, with higher activity at acidic pH. Probably is involved in lysosomal degradation of ribosomal RNA. The protein is Ribonuclease T2 (rnaset2) of Danio rerio (Zebrafish).